A 170-amino-acid polypeptide reads, in one-letter code: Adenine phosphoribosyltransferase (170 aa).

Belongs to the purine/pyrimidine phosphoribosyltransferase family. Homodimer.

The protein resides in the cytoplasm. The enzyme catalyses AMP + diphosphate = 5-phospho-alpha-D-ribose 1-diphosphate + adenine. Its pathway is purine metabolism; AMP biosynthesis via salvage pathway; AMP from adenine: step 1/1. Catalyzes a salvage reaction resulting in the formation of AMP, that is energically less costly than de novo synthesis. This chain is Adenine phosphoribosyltransferase, found in Bacillus mycoides (strain KBAB4) (Bacillus weihenstephanensis).